The chain runs to 243 residues: 1-(5-phosphoribosyl)-5-[(5-phosphoribosylamino)methylideneamino] imidazole-4-carboxamide isomerase (243 aa).

Residue D9 is the Proton acceptor of the active site. The active-site Proton donor is D131.

This sequence belongs to the HisA/HisF family.

The protein resides in the cytoplasm. The enzyme catalyses 1-(5-phospho-beta-D-ribosyl)-5-[(5-phospho-beta-D-ribosylamino)methylideneamino]imidazole-4-carboxamide = 5-[(5-phospho-1-deoxy-D-ribulos-1-ylimino)methylamino]-1-(5-phospho-beta-D-ribosyl)imidazole-4-carboxamide. It functions in the pathway amino-acid biosynthesis; L-histidine biosynthesis; L-histidine from 5-phospho-alpha-D-ribose 1-diphosphate: step 4/9. The sequence is that of 1-(5-phosphoribosyl)-5-[(5-phosphoribosylamino)methylideneamino] imidazole-4-carboxamide isomerase from Campylobacter jejuni (strain RM1221).